We begin with the raw amino-acid sequence, 158 residues long: Cyclic pyranopterin monophosphate synthase (158 aa).

Residues 74 to 76 (MCH) and 112 to 113 (ME) each bind substrate. D127 is a catalytic residue.

It belongs to the MoaC family. Homohexamer; trimer of dimers.

It carries out the reaction (8S)-3',8-cyclo-7,8-dihydroguanosine 5'-triphosphate = cyclic pyranopterin phosphate + diphosphate. The protein operates within cofactor biosynthesis; molybdopterin biosynthesis. Functionally, catalyzes the conversion of (8S)-3',8-cyclo-7,8-dihydroguanosine 5'-triphosphate to cyclic pyranopterin monophosphate (cPMP). The sequence is that of Cyclic pyranopterin monophosphate synthase from Helicobacter pylori (strain P12).